Consider the following 215-residue polypeptide: MSEHETAGEGRFNSIEIRVLGSLIEKQATSPESYPLTLNALVLACNQKTSREPVMNLTQGQVGQALRALEGQGMTRLQMGSRADRWEHRVDKALELVPAQLVLMGLMFLRGPQTLNELLTRSNRLHDFDDTEQIQHQLERLISRDLALHLPRQAGQREDRYTHALGDPAEIEAILAARQQEGGARTSGGSVSEDRIEALEARIAALEARLAELEG.

This sequence belongs to the UPF0502 family.

The sequence is that of UPF0502 protein PP_2442 from Pseudomonas putida (strain ATCC 47054 / DSM 6125 / CFBP 8728 / NCIMB 11950 / KT2440).